The following is a 391-amino-acid chain: BRCA1-A complex subunit Abraxas 1 (391 aa).

One can recognise an MPN domain in the interval 8–156 (VRISGFVLSS…THRLEFSAFI (149 aa)). The stretch at 223-261 (LLAEMQKVCVEVEKSERTVEKLQEDIAQLKEAIGKQKTH) forms a coiled coil. Positions 354-391 (QRLKRKRKTREVSESASESGSDTEIEMNGQSGSNSPVF) are disordered. A compositionally biased stretch (polar residues) spans 367 to 391 (ESASESGSDTEIEMNGQSGSNSPVF). Serine 388 is modified (phosphoserine). Positions 388–391 (SPVF) match the pSXXF motif motif.

The protein belongs to the FAM175 family. Abraxas subfamily. In terms of assembly, component of the ARISC complex. Component of the BRCA1-A complex. Homodimer. Post-translationally, phosphorylation of Ser-388 of the pSXXF motif by ATM or ATR constitutes a specific recognition motif for the BRCT domain of BRCA1.

The protein localises to the nucleus. In terms of biological role, involved in DNA damage response and double-strand break (DSB) repair. Component of the BRCA1-A complex, acting as a central scaffold protein that assembles the various components of the complex. The BRCA1-A complex specifically recognizes 'Lys-63'-linked ubiquitinated histones H2A and H2AX at DNA lesion sites. This complex also possesses deubiquitinase activity that specifically removes 'Lys-63'-linked ubiquitin on histones H2A and H2AX. In Danio rerio (Zebrafish), this protein is BRCA1-A complex subunit Abraxas 1.